Reading from the N-terminus, the 188-residue chain is dTTP/UTP pyrophosphatase (188 aa).

Aspartate 67 acts as the Proton acceptor in catalysis.

The protein belongs to the Maf family. YhdE subfamily. The cofactor is a divalent metal cation.

It localises to the cytoplasm. The enzyme catalyses dTTP + H2O = dTMP + diphosphate + H(+). It carries out the reaction UTP + H2O = UMP + diphosphate + H(+). Its function is as follows. Nucleoside triphosphate pyrophosphatase that hydrolyzes dTTP and UTP. May have a dual role in cell division arrest and in preventing the incorporation of modified nucleotides into cellular nucleic acids. This chain is dTTP/UTP pyrophosphatase, found in Roseobacter denitrificans (strain ATCC 33942 / OCh 114) (Erythrobacter sp. (strain OCh 114)).